A 117-amino-acid polypeptide reads, in one-letter code: Early E3 13.3 kDa protein (117 aa).

The sequence is that of Early E3 13.3 kDa protein from Canine adenovirus serotype 1 (strain Glaxo) (CAdV-1).